Reading from the N-terminus, the 272-residue chain is Glycerol-3-phosphate acyltransferase (272 aa).

The next 6 membrane-spanning stretches (helical) occupy residues 9-29 (IIILFLFIGYFIGNILFGILI), 60-80 (AIVMVLDFFKSWFSTFVCLLI), 99-119 (VIIYLGGFAAIIGHCFPCFYF), 149-169 (ASISPWMFFICFVLFWSICLI), 173-193 (VSLASIVTVFLLPIWSLIPHL), and 226-246 (LNWWYILVTFLLELLTAVLVI).

The protein belongs to the PlsY family. In terms of assembly, probably interacts with PlsX.

Its subcellular location is the cell membrane. The catalysed reaction is an acyl phosphate + sn-glycerol 3-phosphate = a 1-acyl-sn-glycero-3-phosphate + phosphate. It functions in the pathway lipid metabolism; phospholipid metabolism. Its function is as follows. Catalyzes the transfer of an acyl group from acyl-phosphate (acyl-PO(4)) to glycerol-3-phosphate (G3P) to form lysophosphatidic acid (LPA). This enzyme utilizes acyl-phosphate as fatty acyl donor, but not acyl-CoA or acyl-ACP. The chain is Glycerol-3-phosphate acyltransferase from Malacoplasma penetrans (strain HF-2) (Mycoplasma penetrans).